The sequence spans 386 residues: 2-deoxy-scyllo-inosose synthase (386 aa).

NAD(+)-binding positions include Asp-42, 73 to 76, 105 to 109, 129 to 130, 140 to 142, and 151 to 152; these read EEHK, GVTGN, TT, SLK, and KN. Residue Lys-142 is part of the active site. Position 184 (Glu-184) interacts with Co(2+). The active site involves Glu-244. Co(2+)-binding residues include His-247 and His-263.

This sequence belongs to the sugar phosphate cyclases superfamily. DOI synthase family. Requires NAD(+) as cofactor. The cofactor is Co(2+).

The catalysed reaction is D-glucose 6-phosphate = 2-deoxy-L-scyllo-inosose + phosphate. Its pathway is metabolic intermediate biosynthesis; 2-deoxystreptamine biosynthesis; 2-deoxystreptamine from D-glucose 6-phosphate: step 1/4. It functions in the pathway antibiotic biosynthesis; tobramycin biosynthesis. In terms of biological role, catalyzes the intramolecular carbocycle formation from D-glucose-6-phosphate to 2-deoxy-scyllo-inosose (DOI). The chain is 2-deoxy-scyllo-inosose synthase (tbmA) from Streptoalloteichus tenebrarius (strain ATCC 17920 / DSM 40477 / JCM 4838 / CBS 697.72 / NBRC 16177 / NCIMB 11028 / NRRL B-12390 / A12253. 1 / ISP 5477) (Streptomyces tenebrarius).